The chain runs to 221 residues: Phosphoribosylformylglycinamidine synthase subunit PurQ (221 aa).

Residues Lys-2–Lys-221 form the Glutamine amidotransferase type-1 domain. Cys-87 acts as the Nucleophile in catalysis. Residues His-195 and Glu-197 contribute to the active site.

As to quaternary structure, part of the FGAM synthase complex composed of 1 PurL, 1 PurQ and 2 PurS subunits.

It is found in the cytoplasm. It carries out the reaction N(2)-formyl-N(1)-(5-phospho-beta-D-ribosyl)glycinamide + L-glutamine + ATP + H2O = 2-formamido-N(1)-(5-O-phospho-beta-D-ribosyl)acetamidine + L-glutamate + ADP + phosphate + H(+). The catalysed reaction is L-glutamine + H2O = L-glutamate + NH4(+). Its pathway is purine metabolism; IMP biosynthesis via de novo pathway; 5-amino-1-(5-phospho-D-ribosyl)imidazole from N(2)-formyl-N(1)-(5-phospho-D-ribosyl)glycinamide: step 1/2. In terms of biological role, part of the phosphoribosylformylglycinamidine synthase complex involved in the purines biosynthetic pathway. Catalyzes the ATP-dependent conversion of formylglycinamide ribonucleotide (FGAR) and glutamine to yield formylglycinamidine ribonucleotide (FGAM) and glutamate. The FGAM synthase complex is composed of three subunits. PurQ produces an ammonia molecule by converting glutamine to glutamate. PurL transfers the ammonia molecule to FGAR to form FGAM in an ATP-dependent manner. PurS interacts with PurQ and PurL and is thought to assist in the transfer of the ammonia molecule from PurQ to PurL. This chain is Phosphoribosylformylglycinamidine synthase subunit PurQ, found in Deinococcus radiodurans (strain ATCC 13939 / DSM 20539 / JCM 16871 / CCUG 27074 / LMG 4051 / NBRC 15346 / NCIMB 9279 / VKM B-1422 / R1).